Here is a 106-residue protein sequence, read N- to C-terminus: uncharacterized protein (106 aa).

This is an uncharacterized protein from Rhodococcus erythropolis (Arthrobacter picolinophilus).